Here is a 281-residue protein sequence, read N- to C-terminus: MAGLILRKEEFFPSATQAVAVADRYPQNVFAEHTHEFCELVLVWRGNGLHVLNDRPWRITRGDLFYIRAEDKHSYASVNDLVLQNIIYCPERLQLNFDWAGAIPGLFGTPWKPHWRMGSTGMAQARQVISQLEHECARRDAQGNAMAELLFAQLALTLQRHRYATDDPAATQREALLDKLLAALAASLSRPFVLERFCEQEGGSERALRQQFRQQTGMTINHYLRQLRICHAQYLLQHTERLIGDIAMQCGFEDSNYFSVVFSREIGMSPGQWRQRSRAAA.

The HTH araC/xylS-type domain occupies 178 to 276 (DKLLAALAAS…GMSPGQWRQR (99 aa)). DNA-binding regions (H-T-H motif) lie at residues 195-216 (ERFCEQEGGSERALRQQFRQQT) and 243-266 (IGDIAMQCGFEDSNYFSVVFSREI).

As to quaternary structure, binds DNA as a dimer.

The protein resides in the cytoplasm. Its function is as follows. Activates expression of the rhaSR operon in response to L-rhamnose. The protein is HTH-type transcriptional activator RhaR of Klebsiella pneumoniae subsp. pneumoniae (strain ATCC 700721 / MGH 78578).